The chain runs to 179 residues: Ribosomal RNA small subunit methyltransferase G (179 aa).

S-adenosyl-L-methionine is bound by residues glycine 54, phenylalanine 59, 105–106 (IE), and arginine 121.

It belongs to the methyltransferase superfamily. RNA methyltransferase RsmG family.

The protein localises to the cytoplasm. The enzyme catalyses guanosine(527) in 16S rRNA + S-adenosyl-L-methionine = N(7)-methylguanosine(527) in 16S rRNA + S-adenosyl-L-homocysteine. Specifically methylates the N7 position of guanine in position 527 of 16S rRNA. The chain is Ribosomal RNA small subunit methyltransferase G from Helicobacter bizzozeronii.